A 556-amino-acid chain; its full sequence is Dihydroxy-acid dehydratase (556 aa).

Cys-47 provides a ligand contact to [2Fe-2S] cluster. Asp-79 serves as a coordination point for Mg(2+). A [2Fe-2S] cluster-binding site is contributed by Cys-120. Positions 121 and 122 each coordinate Mg(2+). Lys-122 carries the N6-carboxylysine modification. Cys-192 provides a ligand contact to [2Fe-2S] cluster. Glu-444 lines the Mg(2+) pocket. Residue Ser-470 is the Proton acceptor of the active site.

This sequence belongs to the IlvD/Edd family. As to quaternary structure, homodimer. [2Fe-2S] cluster serves as cofactor. The cofactor is Mg(2+).

It carries out the reaction (2R)-2,3-dihydroxy-3-methylbutanoate = 3-methyl-2-oxobutanoate + H2O. The catalysed reaction is (2R,3R)-2,3-dihydroxy-3-methylpentanoate = (S)-3-methyl-2-oxopentanoate + H2O. Its pathway is amino-acid biosynthesis; L-isoleucine biosynthesis; L-isoleucine from 2-oxobutanoate: step 3/4. It functions in the pathway amino-acid biosynthesis; L-valine biosynthesis; L-valine from pyruvate: step 3/4. Functionally, functions in the biosynthesis of branched-chain amino acids. Catalyzes the dehydration of (2R,3R)-2,3-dihydroxy-3-methylpentanoate (2,3-dihydroxy-3-methylvalerate) into 2-oxo-3-methylpentanoate (2-oxo-3-methylvalerate) and of (2R)-2,3-dihydroxy-3-methylbutanoate (2,3-dihydroxyisovalerate) into 2-oxo-3-methylbutanoate (2-oxoisovalerate), the penultimate precursor to L-isoleucine and L-valine, respectively. The sequence is that of Dihydroxy-acid dehydratase from Prochlorococcus marinus (strain MIT 9303).